The sequence spans 242 residues: Adenylate kinase 1 (242 aa).

Residues 38 to 43 (GSGKGT) and Gly-42 each bind ATP. The tract at residues 58–87 (STGDLLREAAEKKTELGLKIKNIINEGKLV) is NMP. AMP is bound by residues Thr-59, Arg-64, 85–87 (KLV), Gly-113, 113–116 (GYPR), and Gln-120. The interval 154–191 (GRLIHKPSGRIYHKIFNPPKVPFRDDVTNEPLIQREDD) is LID. 2 residues coordinate ATP: Arg-155 and Tyr-165. Arg-199 is an AMP binding site. Residue Ala-229 participates in ATP binding.

It belongs to the adenylate kinase family.

The protein localises to the cytoplasm. It carries out the reaction AMP + ATP = 2 ADP. With respect to regulation, inhibited by the dinucleoside pentaphosphate compound P1,P5-di(adenosine-5') pentaphosphate (AP5A). In terms of biological role, catalyzes the reversible transfer of the terminal phosphate group between ATP and AMP. Has very low activity with CTP, GTP, ITP and UTP and no activity with GMP, CMP, UMP or IMP in vitro. The polypeptide is Adenylate kinase 1 (Plasmodium falciparum (isolate 3D7)).